A 336-amino-acid chain; its full sequence is Cytoskeleton protein RodZ (336 aa).

Topologically, residues 1–111 (MNTEATHDKT…LGKRRKKRDG (111 aa)) are cytoplasmic. Residues 19-71 (LRNAREQLGLSQQAVAERLCLKVSTVRDIEEDKAPADLASTFLRGYIRSYAKL) enclose the HTH cro/C1-type domain. Residues 30–49 (QQAVAERLCLKVSTVRDIEE) constitute a DNA-binding region (H-T-H motif). A helical; Signal-anchor for type II membrane protein transmembrane segment spans residues 112–132 (WLMSFTWLVLFVVIGLTGAWW). Residues 133–336 (WQNHKAQQEE…TVSAEQSAAQ (204 aa)) lie on the Periplasmic side of the membrane. Residues 152-164 (AALNNSGNNGAQS) are compositionally biased toward low complexity. A disordered region spans residues 152–235 (AALNNSGNNG…TTTGNVNVTQ (84 aa)). Composition is skewed to polar residues over residues 165–190 (VPLN…TVEP) and 200–217 (PDQT…QANV). Over residues 220 to 235 (APAVTPTTTGNVNVTQ) the composition is skewed to low complexity.

The protein belongs to the RodZ family.

The protein resides in the cell inner membrane. Functionally, cytoskeletal protein that is involved in cell-shape control through regulation of the length of the long axis. The polypeptide is Cytoskeleton protein RodZ (Enterobacter sp. (strain 638)).